Consider the following 260-residue polypeptide: Neuraminyllactose-binding hemagglutinin (260 aa).

The signal sequence occupies residues 1 to 27 (MKTNGHFKDFAWKKCLLGASVGALLVG). The N-palmitoyl cysteine moiety is linked to residue cysteine 28. Cysteine 28 carries the S-diacylglycerol cysteine lipid modification. The segment at 134 to 139 (KRTIQK) is N-acetyl-neuraminyl-alpha(2,3)-lactose binding motif.

The protein resides in the cell outer membrane. The protein is Neuraminyllactose-binding hemagglutinin (hpaA) of Helicobacter pylori (Campylobacter pylori).